The following is a 196-amino-acid chain: Endoribonuclease YbeY (196 aa).

Zn(2+) contacts are provided by His-120, His-124, and His-130.

It belongs to the endoribonuclease YbeY family. Zn(2+) is required as a cofactor.

The protein localises to the cytoplasm. Its function is as follows. Single strand-specific metallo-endoribonuclease involved in late-stage 70S ribosome quality control and in maturation of the 3' terminus of the 16S rRNA. In Corynebacterium diphtheriae (strain ATCC 700971 / NCTC 13129 / Biotype gravis), this protein is Endoribonuclease YbeY.